Consider the following 375-residue polypeptide: Glutamate 5-kinase (375 aa).

Lys-17 contacts ATP. Ser-57, Asp-144, and Asn-156 together coordinate substrate. An ATP-binding site is contributed by 176–177; it reads TD. The region spanning 283 to 361 is the PUA domain; it reads KGELILDTGA…DEIEGILGYV (79 aa).

This sequence belongs to the glutamate 5-kinase family.

The protein localises to the cytoplasm. It catalyses the reaction L-glutamate + ATP = L-glutamyl 5-phosphate + ADP. It functions in the pathway amino-acid biosynthesis; L-proline biosynthesis; L-glutamate 5-semialdehyde from L-glutamate: step 1/2. Its function is as follows. Catalyzes the transfer of a phosphate group to glutamate to form L-glutamate 5-phosphate. This is Glutamate 5-kinase from Thioalkalivibrio sulfidiphilus (strain HL-EbGR7).